Consider the following 522-residue polypeptide: 2-isopropylmalate synthase (522 aa).

Positions 5–267 (VIIFDTTLRD…ETGINAKEIH (263 aa)) constitute a Pyruvate carboxyltransferase domain. Aspartate 14, histidine 202, histidine 204, and asparagine 238 together coordinate Mn(2+). Residues 392–522 (QLQQLVVQSD…MQKNRELGGV (131 aa)) are regulatory domain.

This sequence belongs to the alpha-IPM synthase/homocitrate synthase family. LeuA type 1 subfamily. In terms of assembly, homodimer. Mn(2+) is required as a cofactor.

The protein localises to the cytoplasm. The catalysed reaction is 3-methyl-2-oxobutanoate + acetyl-CoA + H2O = (2S)-2-isopropylmalate + CoA + H(+). It functions in the pathway amino-acid biosynthesis; L-leucine biosynthesis; L-leucine from 3-methyl-2-oxobutanoate: step 1/4. In terms of biological role, catalyzes the condensation of the acetyl group of acetyl-CoA with 3-methyl-2-oxobutanoate (2-ketoisovalerate) to form 3-carboxy-3-hydroxy-4-methylpentanoate (2-isopropylmalate). The polypeptide is 2-isopropylmalate synthase (Shewanella baltica (strain OS195)).